The primary structure comprises 350 residues: DNA-directed RNA polymerase subunit alpha (350 aa).

An alpha N-terminal domain (alpha-NTD) region spans residues 1 to 226; it reads MLISQRPTLS…ELFGLARELN (226 aa). The tract at residues 241–350 is alpha C-terminal domain (alpha-CTD); the sequence is ADHIASFALP…NQDYAETEQL (110 aa). Residues 328 to 350 form a disordered region; it reads GTWTSDAGYDLDDNQDYAETEQL. Positions 336-350 are enriched in acidic residues; it reads YDLDDNQDYAETEQL.

It belongs to the RNA polymerase alpha chain family. Homodimer. The RNAP catalytic core consists of 2 alpha, 1 beta, 1 beta' and 1 omega subunit. When a sigma factor is associated with the core the holoenzyme is formed, which can initiate transcription.

It carries out the reaction RNA(n) + a ribonucleoside 5'-triphosphate = RNA(n+1) + diphosphate. DNA-dependent RNA polymerase catalyzes the transcription of DNA into RNA using the four ribonucleoside triphosphates as substrates. The protein is DNA-directed RNA polymerase subunit alpha of Mycolicibacterium smegmatis (strain ATCC 700084 / mc(2)155) (Mycobacterium smegmatis).